The chain runs to 297 residues: Bifunctional protein FolD 2 (297 aa).

Residues 172-174, T199, and V240 contribute to the NADP(+) site; that span reads GRG.

It belongs to the tetrahydrofolate dehydrogenase/cyclohydrolase family. In terms of assembly, homodimer.

It catalyses the reaction (6R)-5,10-methylene-5,6,7,8-tetrahydrofolate + NADP(+) = (6R)-5,10-methenyltetrahydrofolate + NADPH. The enzyme catalyses (6R)-5,10-methenyltetrahydrofolate + H2O = (6R)-10-formyltetrahydrofolate + H(+). It functions in the pathway one-carbon metabolism; tetrahydrofolate interconversion. Functionally, catalyzes the oxidation of 5,10-methylenetetrahydrofolate to 5,10-methenyltetrahydrofolate and then the hydrolysis of 5,10-methenyltetrahydrofolate to 10-formyltetrahydrofolate. The chain is Bifunctional protein FolD 2 from Paenarthrobacter aurescens (strain TC1).